Reading from the N-terminus, the 123-residue chain is Fluoride-specific ion channel FluC (123 aa).

A run of 4 helical transmembrane segments spans residues 7–27, 39–59, 68–88, and 101–121; these read LAVAAGGALGALFRFYLSGLL, MVNGLASFILGYLYGLLFWGF, FLGTGFCGGLSTFSTFSYETF, and LNVAANVFVTISLVFIGFLLA. Positions 75 and 78 each coordinate Na(+).

It belongs to the fluoride channel Fluc/FEX (TC 1.A.43) family.

The protein resides in the cell membrane. The enzyme catalyses fluoride(in) = fluoride(out). With respect to regulation, na(+) is not transported, but it plays an essential structural role and its presence is essential for fluoride channel function. Its function is as follows. Fluoride-specific ion channel. Important for reducing fluoride concentration in the cell, thus reducing its toxicity. This chain is Fluoride-specific ion channel FluC, found in Thermococcus gammatolerans (strain DSM 15229 / JCM 11827 / EJ3).